Here is a 1217-residue protein sequence, read N- to C-terminus: ATP-dependent helicase/nuclease subunit A (1217 aa).

Residues 10–475 form the UvrD-like helicase ATP-binding domain; the sequence is VIWTDAQWQS…IDLSQNFRSR (466 aa). 31–38 lines the ATP pocket; that stretch reads AAAGSGKT. The 311-residue stretch at 476–786 folds into the UvrD-like helicase C-terminal domain; that stretch reads KEVLSTTNYI…RMMTIHSSKG (311 aa).

This sequence belongs to the helicase family. AddA subfamily. Heterodimer of AddA and AddB/RexB. It depends on Mg(2+) as a cofactor.

It catalyses the reaction Couples ATP hydrolysis with the unwinding of duplex DNA by translocating in the 3'-5' direction.. The catalysed reaction is ATP + H2O = ADP + phosphate + H(+). In terms of biological role, the heterodimer acts as both an ATP-dependent DNA helicase and an ATP-dependent, dual-direction single-stranded exonuclease. Recognizes the chi site generating a DNA molecule suitable for the initiation of homologous recombination. The AddA nuclease domain is required for chi fragment generation; this subunit has the helicase and 3' -&gt; 5' nuclease activities. The sequence is that of ATP-dependent helicase/nuclease subunit A from Staphylococcus aureus (strain MSSA476).